Consider the following 229-residue polypeptide: Cytidylate kinase (229 aa).

12–20 (GPSGAGKGT) provides a ligand contact to ATP.

This sequence belongs to the cytidylate kinase family. Type 1 subfamily.

The protein resides in the cytoplasm. The enzyme catalyses CMP + ATP = CDP + ADP. It catalyses the reaction dCMP + ATP = dCDP + ADP. In Pseudomonas aeruginosa (strain UCBPP-PA14), this protein is Cytidylate kinase.